We begin with the raw amino-acid sequence, 475 residues long: Bifunctional protein HldE (475 aa).

Residues 1–317 (MQYSAQFNRA…ENAIHGRTTA (317 aa)) are ribokinase. Residue 194–197 (NMSE) coordinates ATP. Residue Asp-263 is part of the active site. The segment at 343–475 (MTNGCFDILH…VIKKIQQLKE (133 aa)) is cytidylyltransferase.

In the N-terminal section; belongs to the carbohydrate kinase PfkB family. This sequence in the C-terminal section; belongs to the cytidylyltransferase family. Homodimer.

It carries out the reaction D-glycero-beta-D-manno-heptose 7-phosphate + ATP = D-glycero-beta-D-manno-heptose 1,7-bisphosphate + ADP + H(+). It catalyses the reaction D-glycero-beta-D-manno-heptose 1-phosphate + ATP + H(+) = ADP-D-glycero-beta-D-manno-heptose + diphosphate. It functions in the pathway nucleotide-sugar biosynthesis; ADP-L-glycero-beta-D-manno-heptose biosynthesis; ADP-L-glycero-beta-D-manno-heptose from D-glycero-beta-D-manno-heptose 7-phosphate: step 1/4. The protein operates within nucleotide-sugar biosynthesis; ADP-L-glycero-beta-D-manno-heptose biosynthesis; ADP-L-glycero-beta-D-manno-heptose from D-glycero-beta-D-manno-heptose 7-phosphate: step 3/4. Functionally, catalyzes the phosphorylation of D-glycero-D-manno-heptose 7-phosphate at the C-1 position to selectively form D-glycero-beta-D-manno-heptose-1,7-bisphosphate. In terms of biological role, catalyzes the ADP transfer from ATP to D-glycero-beta-D-manno-heptose 1-phosphate, yielding ADP-D-glycero-beta-D-manno-heptose. The sequence is that of Bifunctional protein HldE from Histophilus somni (strain 129Pt) (Haemophilus somnus).